The following is a 151-amino-acid chain: 3-dehydroquinate dehydratase (151 aa).

The Proton acceptor role is filled by Tyr-24. Asn-76, His-82, and Asp-89 together coordinate substrate. Catalysis depends on His-102, which acts as the Proton donor. Substrate-binding positions include 103-104 (LS) and Arg-113.

It belongs to the type-II 3-dehydroquinase family. In terms of assembly, homododecamer.

It carries out the reaction 3-dehydroquinate = 3-dehydroshikimate + H2O. It participates in metabolic intermediate biosynthesis; chorismate biosynthesis; chorismate from D-erythrose 4-phosphate and phosphoenolpyruvate: step 3/7. Its function is as follows. Catalyzes a trans-dehydration via an enolate intermediate. The chain is 3-dehydroquinate dehydratase from Acinetobacter baumannii (strain AB307-0294).